The chain runs to 39 residues: Natriuretic peptide TNPc (39 aa).

The cysteines at positions 9 and 25 are disulfide-linked.

It belongs to the natriuretic peptide family. In terms of tissue distribution, expressed by the venom gland.

The protein localises to the secreted. Snake venom natriuretic peptide that exhibits vasoactive and hypotensive activity. Produces a near complete relaxation in pre-contracted aortae by activating the natriuretic peptide receptor 1 (NPR1). Stimulates cGMP production through the natriuretic peptide receptor 1 (NPR1) with high potencies for the rat NPR1 (EC(50)=100 nM), and very weak potencies over human NPR1 (28% activation at 10 uM). In vivo, reduces both systolic and diastolic blood pressure with no effect on heart rate, when intravenously injected in conscious rabbits. Also enhances the bradycardia due to cardiac afferent stimulation (Bezold-Jarisch reflex). This Oxyuranus microlepidotus (Inland taipan) protein is Natriuretic peptide TNPc.